The chain runs to 968 residues: Probable transport protein MmpL2 (968 aa).

11 consecutive transmembrane segments (helical) span residues 22 to 42, 204 to 224, 245 to 265, 297 to 317, 328 to 348, 378 to 398, 763 to 783, 787 to 807, 815 to 835, 866 to 886, and 890 to 910; these read FAVVIVLLWLGFTAFVNLAVP, VIAAMLLVIYRSVITAVLVLI, IFSLSTFATNLLVLMAIAAST, AHVILGSGLTIAGAMYCLSFA, PIAIGMLVAVLAALTLGPAVL, WPGPVLAATCLVASIGLLALP, YDLLIAGVAAISLILIIMMII, VVAAVVIVGTVVLSMGASFGL, ILGIELYWMVLAMSVILLLAV, TGGVVTAAGMVFAVTMSLFVF, and RIIGQIGTTIGLGLLFDTLVV.

Belongs to the resistance-nodulation-cell division (RND) (TC 2.A.6) family. MmpL subfamily.

The protein localises to the cell membrane. This chain is Probable transport protein MmpL2 (mmpL2), found in Mycobacterium tuberculosis (strain CDC 1551 / Oshkosh).